The chain runs to 67 residues: Large ribosomal subunit protein bL35 (67 aa).

It belongs to the bacterial ribosomal protein bL35 family.

This is Large ribosomal subunit protein bL35 from Sphingopyxis alaskensis (strain DSM 13593 / LMG 18877 / RB2256) (Sphingomonas alaskensis).